Reading from the N-terminus, the 308-residue chain is Putative hydrolase MT0526 (308 aa).

Residues 1–48 form a disordered region; it reads MMVSSHLGSPDQAGHVDLASPADPPPPDASASHSPVDMPAPVAAAGSD. The active-site Nucleophile is the aspartate 62. Mg(2+)-binding residues include aspartate 62, aspartate 64, and aspartate 237. Aspartate 64 (proton donor) is an active-site residue.

The protein belongs to the HAD-like hydrolase superfamily. SerB family. Mg(2+) is required as a cofactor.

The polypeptide is Putative hydrolase MT0526 (Mycobacterium tuberculosis (strain CDC 1551 / Oshkosh)).